The primary structure comprises 207 residues: Thiamine-phosphate synthase (207 aa).

4-amino-2-methyl-5-(diphosphooxymethyl)pyrimidine contacts are provided by residues 36 to 40 (QLRMK) and Asn-68. Asp-69 and Asp-88 together coordinate Mg(2+). Ser-106 is a binding site for 4-amino-2-methyl-5-(diphosphooxymethyl)pyrimidine. 2-[(2R,5Z)-2-carboxy-4-methylthiazol-5(2H)-ylidene]ethyl phosphate is bound at residue 132-134 (TNT). A 4-amino-2-methyl-5-(diphosphooxymethyl)pyrimidine-binding site is contributed by Lys-135. Residues Gly-162 and 182 to 183 (VS) contribute to the 2-[(2R,5Z)-2-carboxy-4-methylthiazol-5(2H)-ylidene]ethyl phosphate site.

Belongs to the thiamine-phosphate synthase family. The cofactor is Mg(2+).

The enzyme catalyses 2-[(2R,5Z)-2-carboxy-4-methylthiazol-5(2H)-ylidene]ethyl phosphate + 4-amino-2-methyl-5-(diphosphooxymethyl)pyrimidine + 2 H(+) = thiamine phosphate + CO2 + diphosphate. It carries out the reaction 2-(2-carboxy-4-methylthiazol-5-yl)ethyl phosphate + 4-amino-2-methyl-5-(diphosphooxymethyl)pyrimidine + 2 H(+) = thiamine phosphate + CO2 + diphosphate. The catalysed reaction is 4-methyl-5-(2-phosphooxyethyl)-thiazole + 4-amino-2-methyl-5-(diphosphooxymethyl)pyrimidine + H(+) = thiamine phosphate + diphosphate. Its pathway is cofactor biosynthesis; thiamine diphosphate biosynthesis; thiamine phosphate from 4-amino-2-methyl-5-diphosphomethylpyrimidine and 4-methyl-5-(2-phosphoethyl)-thiazole: step 1/1. Condenses 4-methyl-5-(beta-hydroxyethyl)thiazole monophosphate (THZ-P) and 2-methyl-4-amino-5-hydroxymethyl pyrimidine pyrophosphate (HMP-PP) to form thiamine monophosphate (TMP). The chain is Thiamine-phosphate synthase from Methanococcus maripaludis (strain C7 / ATCC BAA-1331).